Consider the following 143-residue polypeptide: MAMAFKMATTGMRVTDECTSSFMDMKWKKVHRYIVFKIEEKSRKVTVDKVGGAGESYHDLEDSLPVDDCRYAVFDFDFVTVDNCRKSKIFFIAWSPEASKIRAKILYATSKDGLRRVLEGIHYELQATDPTEMGFDIIQDRAK.

Residues 11–143 (GMRVTDECTS…GFDIIQDRAK (133 aa)) enclose the ADF-H domain.

This sequence belongs to the actin-binding proteins ADF family. In terms of tissue distribution, expressed exclusively in root tip meristem.

It is found in the cytoplasm. The protein resides in the cytoskeleton. In terms of biological role, actin-depolymerizing protein. Severs actin filaments (F-actin) and binds to actin monomers. This chain is Actin-depolymerizing factor 5 (ADF5), found in Arabidopsis thaliana (Mouse-ear cress).